Consider the following 216-residue polypeptide: Vesicle-associated membrane protein 7A (216 aa).

Topologically, residues 1 to 189 are cytoplasmic; it reads MSQTDILYAC…KRKLWWQNKK (189 aa). The Longin domain occupies 6–112; sequence ILYACVSYKG…ATYDPFIRVL (107 aa). The v-SNARE coiled-coil homology domain maps to 126-186; sequence KMNLVMDQVS…VALKRKLWWQ (61 aa). The helical; Anchor for type IV membrane protein transmembrane segment at 190-210 threads the bilayer; the sequence is LAIAIGLVVCILIAVITLALL. The Vesicular portion of the chain corresponds to 211–216; it reads KYFKVI.

The protein belongs to the synaptobrevin family. Component of the SNARE complex composed of syn7A, syn8A, vamp7A and vti1A.

Its subcellular location is the cytoplasmic vesicle. It is found in the secretory vesicle membrane. The protein localises to the golgi apparatus. It localises to the trans-Golgi network membrane. The protein resides in the late endosome membrane. Its subcellular location is the lysosome membrane. It is found in the endoplasmic reticulum membrane. The protein localises to the phagosome membrane. Functionally, involved in the targeting and/or fusion of transport vesicles to their target membrane during transport of proteins from the early endosome to the lysosome. Required for heterotypic fusion of late endosomes with lysosomes and homotypic lysosomal fusion. Required for calcium regulated lysosomal exocytosis. This is Vesicle-associated membrane protein 7A from Dictyostelium discoideum (Social amoeba).